A 124-amino-acid chain; its full sequence is UPF0342 protein DSY2926 (124 aa).

This sequence belongs to the UPF0342 family.

This Desulfitobacterium hafniense (strain Y51) protein is UPF0342 protein DSY2926.